The chain runs to 251 residues: Osmotin-like protein (251 aa).

An N-terminal signal peptide occupies residues 1 to 21 (MSHLTTFLVFFLLAFVTYTYA). 8 disulfide bridges follow: Cys31/Cys226, Cys73/Cys83, Cys88/Cys94, Cys142/Cys214, Cys147/Cys197, Cys155/Cys165, Cys169/Cys178, and Cys179/Cys184. Asn233 carries N-linked (GlcNAc...) asparagine glycosylation.

The protein belongs to the thaumatin family.

In Nicotiana tabacum (Common tobacco), this protein is Osmotin-like protein (OLPA).